We begin with the raw amino-acid sequence, 825 residues long: Probable phosphoketolase (825 aa).

It belongs to the XFP family. The cofactor is thiamine diphosphate.

This Bifidobacterium animalis subsp. lactis (strain AD011) protein is Probable phosphoketolase.